Here is a 150-residue protein sequence, read N- to C-terminus: UPF0208 membrane protein VS_0999 (150 aa).

The next 2 membrane-spanning stretches (helical) occupy residues Phe42–Asn62 and Ala70–Asn90.

This sequence belongs to the UPF0208 family.

The protein localises to the cell inner membrane. This Vibrio atlanticus (strain LGP32) (Vibrio splendidus (strain Mel32)) protein is UPF0208 membrane protein VS_0999.